The chain runs to 89 residues: Small ribosomal subunit protein uS14 (89 aa).

It belongs to the universal ribosomal protein uS14 family. As to quaternary structure, part of the 30S ribosomal subunit. Contacts proteins S3 and S10.

In terms of biological role, binds 16S rRNA, required for the assembly of 30S particles and may also be responsible for determining the conformation of the 16S rRNA at the A site. This Parabacteroides distasonis (strain ATCC 8503 / DSM 20701 / CIP 104284 / JCM 5825 / NCTC 11152) protein is Small ribosomal subunit protein uS14.